A 146-amino-acid chain; its full sequence is Endothelial differentiation-related factor 1 homolog (146 aa).

The segment at R13–V53 is disordered. The span at S17 to Q31 shows a compositional bias: low complexity. Positions R32–K41 are enriched in basic and acidic residues. One can recognise an HTH cro/C1-type domain in the interval I80–K134. A DNA-binding region (H-T-H motif) is located at residues Q91–C110.

The protein resides in the nucleus. Probable transcriptional coactivator. The chain is Endothelial differentiation-related factor 1 homolog (edf1) from Danio rerio (Zebrafish).